Reading from the N-terminus, the 934-residue chain is Bifunctional uridylyltransferase/uridylyl-removing enzyme (934 aa).

Positions 1-379 (MSAHDLKLEE…TFSRRKRKLS (379 aa)) are uridylyltransferase. The tract at residues 380–736 (DDGAFISENH…AKPHAFEAVT (357 aa)) is uridylyl-removing. The 118-residue stretch at 496–613 (VDEHLLRCIA…IDFADTVQTM (118 aa)) folds into the HD domain. 2 consecutive ACT domains span residues 737-818 (EITV…DMLA) and 848-931 (VIEV…RSPQ).

The protein belongs to the GlnD family. Mg(2+) is required as a cofactor.

The catalysed reaction is [protein-PII]-L-tyrosine + UTP = [protein-PII]-uridylyl-L-tyrosine + diphosphate. It catalyses the reaction [protein-PII]-uridylyl-L-tyrosine + H2O = [protein-PII]-L-tyrosine + UMP + H(+). Uridylyltransferase (UTase) activity is inhibited by glutamine, while glutamine activates uridylyl-removing (UR) activity. Modifies, by uridylylation and deuridylylation, the PII regulatory proteins (GlnB and homologs), in response to the nitrogen status of the cell that GlnD senses through the glutamine level. Under low glutamine levels, catalyzes the conversion of the PII proteins and UTP to PII-UMP and PPi, while under higher glutamine levels, GlnD hydrolyzes PII-UMP to PII and UMP (deuridylylation). Thus, controls uridylylation state and activity of the PII proteins, and plays an important role in the regulation of nitrogen assimilation and metabolism. This is Bifunctional uridylyltransferase/uridylyl-removing enzyme from Brucella ovis (strain ATCC 25840 / 63/290 / NCTC 10512).